The primary structure comprises 52 residues: Lysis protein for colicin N (52 aa).

The first 17 residues, 1–17 (MCGKILLILFFIMTLSA), serve as a signal peptide directing secretion. C18 carries N-palmitoyl cysteine lipidation. A lipid anchor (S-diacylglycerol cysteine) is attached at C18.

It localises to the cell outer membrane. Its function is as follows. Lysis proteins are required for both colicin release and partial cell lysis. This chain is Lysis protein for colicin N (cnl), found in Escherichia coli.